A 262-amino-acid chain; its full sequence is Hydroxyethylthiazole kinase (262 aa).

Met50 contacts substrate. 2 residues coordinate ATP: Arg125 and Thr171. Substrate is bound at residue Gly198.

The protein belongs to the Thz kinase family. The cofactor is Mg(2+).

The catalysed reaction is 5-(2-hydroxyethyl)-4-methylthiazole + ATP = 4-methyl-5-(2-phosphooxyethyl)-thiazole + ADP + H(+). The protein operates within cofactor biosynthesis; thiamine diphosphate biosynthesis; 4-methyl-5-(2-phosphoethyl)-thiazole from 5-(2-hydroxyethyl)-4-methylthiazole: step 1/1. Catalyzes the phosphorylation of the hydroxyl group of 4-methyl-5-beta-hydroxyethylthiazole (THZ). The protein is Hydroxyethylthiazole kinase of Escherichia coli O45:K1 (strain S88 / ExPEC).